The chain runs to 331 residues: PDZ and LIM domain protein 4 (331 aa).

One can recognise a PDZ domain in the interval 1-84 (MPHSVTLRGP…HLTLSVSRPE (84 aa)). Disordered stretches follow at residues 80–99 (VSRPEGRSWPSTPEDNKAQA), 105–152 (DSEA…GSNS), and 221–243 (AGEGGERPGPGGPRNLKPTASKL). Phosphoserine is present on residues serine 112, serine 116, serine 120, and serine 135. One can recognise an LIM zinc-binding domain in the interval 254 to 313 (PECTRCGHGIVGTIVKARDKLYHPECFMCSDCGLNLKQRGYFFLDERLYCESHAKARVKP).

Homodimer. Interacts (via C-terminus only or via combined C-terminus and LIM domain, but not LIM domain only) with PTPN13 (via the second or fourth PDZ domains). Found in a complex with PTPN13 and TRIP6. Interacts (via PDZ domain) with ACTN1 and ACTN2 (via C-terminal SDL residues). Interacts (via PDZ domain) with TRIP6 (via the second LIM domain or via the third LIM domain plus C-terminus). Interacts (via LIM domain) with GRIA1 (via C-terminus); this interaction as well as the interaction with alpha-actinin is required for their colocalization in early endosomes. Interacts with PDLIM1. Forms (via LIM domain) a heterodimer with PDLIM3. Interacts directly with SRC (via kinase domain and to a lesser extent the SH2 domain). In terms of processing, phosphorylated on tyrosine residue(s). Can be dephosphorylated by PTPN13.

It localises to the cytoplasm. Its subcellular location is the cytoskeleton. The protein localises to the cell projection. It is found in the dendritic spine. The protein resides in the early endosome membrane. It localises to the recycling endosome membrane. Its subcellular location is the nucleus. The protein localises to the perinuclear region. It is found in the lamellipodium. The protein resides in the synapse. It localises to the synaptosome. Functionally, suppresses SRC activation by recognizing and binding to active SRC and facilitating PTPN13-mediated dephosphorylation of SRC 'Tyr-419' leading to its inactivation. Inactivated SRC dissociates from this protein allowing the initiation of a new SRC inactivation cycle. Involved in reorganization of the actin cytoskeleton. In nonmuscle cells, binds to ACTN1 (alpha-actinin-1), increases the affinity of ACTN1 to F-actin (filamentous actin), and promotes formation of actin stress fibers. Involved in regulation of the synaptic AMPA receptor transport in dendritic spines of hippocampal pyramidal neurons directing the receptors toward an insertion at the postsynaptic membrane. Links endosomal surface-internalized GRIA1-containing AMPA receptors to the alpha-actinin/actin cytoskeleton. Increases AMPA receptor-mediated excitatory postsynaptic currents in neurons. This Bos taurus (Bovine) protein is PDZ and LIM domain protein 4 (PDLIM4).